The chain runs to 916 residues: Nitrate reductase [NADH] 1 (916 aa).

The interval 1 to 77 (MAASVQPRQF…DDEEEEQEDW (77 aa)) is disordered. Residues 66–76 (GSDDEEEEQED) are compositionally biased toward acidic residues. Cys-192 serves as a coordination point for Mo-molybdopterin. Residues 541–616 (GKQFTMSEVR…LDTYRIGELI (76 aa)) enclose the Cytochrome b5 heme-binding domain. 2 residues coordinate heme: His-576 and His-599. The 113-residue stretch at 656-768 (RDKVPCQLVD…KGPLGHVEYT (113 aa)) folds into the FAD-binding FR-type domain. FAD-binding positions include 708-711 (RAYT), 725-729 (LIKVY), Phe-730, Phe-737, 742-744 (LMT), Ser-792, and Thr-795.

This sequence belongs to the nitrate reductase family. As to quaternary structure, homodimer. FAD serves as cofactor. The cofactor is heme. Mo-molybdopterin is required as a cofactor.

The catalysed reaction is nitrite + NAD(+) + H2O = nitrate + NADH + H(+). Its function is as follows. Nitrate reductase is a key enzyme involved in the first step of nitrate assimilation in plants, fungi and bacteria. The sequence is that of Nitrate reductase [NADH] 1 (NIA1) from Oryza sativa subsp. japonica (Rice).